The primary structure comprises 196 residues: Dephospho-CoA kinase (196 aa).

In terms of domain architecture, DPCK spans 6–196; the sequence is AIALTGGIGT…QVERFLKTLL (191 aa). ATP is bound at residue 14–19; the sequence is GTGKST.

This sequence belongs to the CoaE family.

The protein localises to the cytoplasm. The catalysed reaction is 3'-dephospho-CoA + ATP = ADP + CoA + H(+). It functions in the pathway cofactor biosynthesis; coenzyme A biosynthesis; CoA from (R)-pantothenate: step 5/5. In terms of biological role, catalyzes the phosphorylation of the 3'-hydroxyl group of dephosphocoenzyme A to form coenzyme A. The sequence is that of Dephospho-CoA kinase from Helicobacter pylori (strain J99 / ATCC 700824) (Campylobacter pylori J99).